The following is a 330-amino-acid chain: Ketol-acid reductoisomerase (NADP(+)) (330 aa).

The KARI N-terminal Rossmann domain maps to M1 to T181. NADP(+)-binding positions include Y24–Q27, R47, S52, and D82–Q85. The active site involves H107. G133 is an NADP(+) binding site. Residues T182 to E327 form the KARI C-terminal knotted domain. 4 residues coordinate Mg(2+): D190, E194, E226, and E230. S251 lines the substrate pocket.

The protein belongs to the ketol-acid reductoisomerase family. It depends on Mg(2+) as a cofactor.

It catalyses the reaction (2R)-2,3-dihydroxy-3-methylbutanoate + NADP(+) = (2S)-2-acetolactate + NADPH + H(+). The enzyme catalyses (2R,3R)-2,3-dihydroxy-3-methylpentanoate + NADP(+) = (S)-2-ethyl-2-hydroxy-3-oxobutanoate + NADPH + H(+). Its pathway is amino-acid biosynthesis; L-isoleucine biosynthesis; L-isoleucine from 2-oxobutanoate: step 2/4. The protein operates within amino-acid biosynthesis; L-valine biosynthesis; L-valine from pyruvate: step 2/4. Functionally, involved in the biosynthesis of branched-chain amino acids (BCAA). Catalyzes an alkyl-migration followed by a ketol-acid reduction of (S)-2-acetolactate (S2AL) to yield (R)-2,3-dihydroxy-isovalerate. In the isomerase reaction, S2AL is rearranged via a Mg-dependent methyl migration to produce 3-hydroxy-3-methyl-2-ketobutyrate (HMKB). In the reductase reaction, this 2-ketoacid undergoes a metal-dependent reduction by NADPH to yield (R)-2,3-dihydroxy-isovalerate. This is Ketol-acid reductoisomerase (NADP(+)) from Methanococcus maripaludis (strain C7 / ATCC BAA-1331).